A 134-amino-acid chain; its full sequence is Complexin-1 (134 aa).

Residues 1–112 (MEFVMKQALG…PGCGDAAEEE (112 aa)) form a disordered region. A compositionally biased stretch (basic and acidic residues) spans 15-81 (DMGKMLGGDE…IKKKEEREAE (67 aa)). A coiled-coil region spans residues 29-69 (DAAKKEEERQEALRQEEEERKAKYAKMEAEREAVRQGIRDK). An interaction with the SNARE complex region spans residues 48-70 (RKAKYAKMEAEREAVRQGIRDKY).

This sequence belongs to the complexin/synaphin family. Binds to the SNARE core complex containing SNAP25, VAMP2 and STX1A.

Its subcellular location is the cytoplasm. It localises to the cytosol. The protein localises to the perikaryon. It is found in the presynapse. In terms of biological role, positively regulates a late step in synaptic vesicle exocytosis. Organizes the SNAREs into a cross-linked zigzag topology that, when interposed between the vesicle and plasma membranes, is incompatible with fusion, thereby preventing SNAREs from releasing neurotransmitters until an action potential arrives at the synapse. Also involved in glucose-induced secretion of insulin by pancreatic beta-cells. In Bos taurus (Bovine), this protein is Complexin-1 (CPLX1).